Here is a 419-residue protein sequence, read N- to C-terminus: UDP-N-acetylglucosamine 1-carboxyvinyltransferase (419 aa).

22–23 serves as a coordination point for phosphoenolpyruvate; that stretch reads KN. Arginine 95 serves as a coordination point for UDP-N-acetyl-alpha-D-glucosamine. Catalysis depends on cysteine 119, which acts as the Proton donor. At cysteine 119 the chain carries 2-(S-cysteinyl)pyruvic acid O-phosphothioketal. Residues aspartate 308 and isoleucine 330 each coordinate UDP-N-acetyl-alpha-D-glucosamine.

Belongs to the EPSP synthase family. MurA subfamily.

Its subcellular location is the cytoplasm. The enzyme catalyses phosphoenolpyruvate + UDP-N-acetyl-alpha-D-glucosamine = UDP-N-acetyl-3-O-(1-carboxyvinyl)-alpha-D-glucosamine + phosphate. It functions in the pathway cell wall biogenesis; peptidoglycan biosynthesis. Functionally, cell wall formation. Adds enolpyruvyl to UDP-N-acetylglucosamine. The chain is UDP-N-acetylglucosamine 1-carboxyvinyltransferase from Rickettsia bellii (strain OSU 85-389).